Here is a 313-residue protein sequence, read N- to C-terminus: Aspartate carbamoyltransferase catalytic subunit (313 aa).

2 residues coordinate carbamoyl phosphate: Arg-61 and Thr-62. Position 89 (Lys-89) interacts with L-aspartate. Carbamoyl phosphate is bound by residues Arg-111, His-139, and Gln-142. Residues Arg-172 and Arg-227 each coordinate L-aspartate. Carbamoyl phosphate-binding residues include Gly-268 and Pro-269.

Belongs to the aspartate/ornithine carbamoyltransferase superfamily. ATCase family. In terms of assembly, heterododecamer (2C3:3R2) of six catalytic PyrB chains organized as two trimers (C3), and six regulatory PyrI chains organized as three dimers (R2).

It catalyses the reaction carbamoyl phosphate + L-aspartate = N-carbamoyl-L-aspartate + phosphate + H(+). Its pathway is pyrimidine metabolism; UMP biosynthesis via de novo pathway; (S)-dihydroorotate from bicarbonate: step 2/3. In terms of biological role, catalyzes the condensation of carbamoyl phosphate and aspartate to form carbamoyl aspartate and inorganic phosphate, the committed step in the de novo pyrimidine nucleotide biosynthesis pathway. In Gluconobacter oxydans (strain 621H) (Gluconobacter suboxydans), this protein is Aspartate carbamoyltransferase catalytic subunit.